We begin with the raw amino-acid sequence, 238 residues long: Phosphoribosylaminoimidazole-succinocarboxamide synthase (238 aa).

This sequence belongs to the SAICAR synthetase family.

The catalysed reaction is 5-amino-1-(5-phospho-D-ribosyl)imidazole-4-carboxylate + L-aspartate + ATP = (2S)-2-[5-amino-1-(5-phospho-beta-D-ribosyl)imidazole-4-carboxamido]succinate + ADP + phosphate + 2 H(+). It participates in purine metabolism; IMP biosynthesis via de novo pathway; 5-amino-1-(5-phospho-D-ribosyl)imidazole-4-carboxamide from 5-amino-1-(5-phospho-D-ribosyl)imidazole-4-carboxylate: step 1/2. This is Phosphoribosylaminoimidazole-succinocarboxamide synthase from Persephonella marina (strain DSM 14350 / EX-H1).